A 469-amino-acid chain; its full sequence is Phosphoglucosamine mutase (469 aa).

The active-site Phosphoserine intermediate is Ser117. Residues Ser117, Asp263, Asp265, and Asp267 each coordinate Mg(2+). Phosphoserine is present on Ser117.

This sequence belongs to the phosphohexose mutase family. It depends on Mg(2+) as a cofactor. In terms of processing, activated by phosphorylation.

It carries out the reaction alpha-D-glucosamine 1-phosphate = D-glucosamine 6-phosphate. Its function is as follows. Catalyzes the conversion of glucosamine-6-phosphate to glucosamine-1-phosphate. The chain is Phosphoglucosamine mutase from Anaeromyxobacter sp. (strain Fw109-5).